The primary structure comprises 210 residues: Cytochrome c biogenesis ATP-binding export protein CcmA (210 aa).

The ABC transporter domain occupies 3 to 205; that stretch reads LHLQAAGLAC…KPSGYRELNL (203 aa). Residue 37–44 participates in ATP binding; that stretch reads GPNGSGKT.

Belongs to the ABC transporter superfamily. CcmA exporter (TC 3.A.1.107) family. In terms of assembly, the complex is composed of two ATP-binding proteins (CcmA) and two transmembrane proteins (CcmB).

It is found in the cell inner membrane. The enzyme catalyses heme b(in) + ATP + H2O = heme b(out) + ADP + phosphate + H(+). Part of the ABC transporter complex CcmAB involved in the biogenesis of c-type cytochromes; once thought to export heme, this seems not to be the case, but its exact role is uncertain. Responsible for energy coupling to the transport system. The sequence is that of Cytochrome c biogenesis ATP-binding export protein CcmA from Pseudomonas putida (strain ATCC 47054 / DSM 6125 / CFBP 8728 / NCIMB 11950 / KT2440).